Reading from the N-terminus, the 719-residue chain is Fusicoccadiene synthase (719 aa).

The fusicocca-2,10(14)-diene synthase stretch occupies residues 1 to 334 (MEFKYSEVVE…RYNPDVSFNK (334 aa)). Mg(2+)-binding residues include Asp92 and Asp96. The tract at residues 335-719 (TQLEWMRQGL…MRLLLELLRV (385 aa)) is geranylgeranyl diphosphate synthase. Positions 358–404 (EIDSDESAVSPTADESDSTEDSLGSGSRQDSSLSTGLSLSPVHSNEG) are disordered. The segment covering 378–400 (DSLGSGSRQDSSLSTGLSLSPVH) has biased composition (polar residues). 3 residues coordinate isopentenyl diphosphate: Lys435, Arg438, and His467. Residues Asp474 and Asp478 each coordinate Mg(2+). Dimethylallyl diphosphate is bound at residue Arg483. Arg484 lines the isopentenyl diphosphate pocket. Positions 561, 562, 602, 609, 619, and 629 each coordinate dimethylallyl diphosphate.

In the N-terminal section; belongs to the terpene synthase family. This sequence in the C-terminal section; belongs to the FPP/GGPP synthase family. In terms of assembly, hexamer.

It catalyses the reaction geranylgeranyl diphosphate = fusicocca-2,10(14)-diene + diphosphate. The catalysed reaction is isopentenyl diphosphate + (2E,6E)-farnesyl diphosphate = (2E,6E,10E)-geranylgeranyl diphosphate + diphosphate. It functions in the pathway mycotoxin biosynthesis. Its function is as follows. Multifunctional diterpene synthase; part of the 2 gene clusters that mediate the biosynthesis of fusicoccins, diterpene glucosides that display phytohormone-like activity and function as potent activators of plasma membrane H(+)-ATPases in plants by modifying 14-3-3 proteins and cause the plant disease constriction canker. The first step in the pathway is performed by the fusicoccadiene synthase PaFS that possesses both prenyl transferase and terpene cyclase activity, converting isopentenyl diphosphate and dimethylallyl diphosphate into geranylgeranyl diphosphate (GGDP) and successively converting GGDP into fusicocca-2,10(14)-diene, a precursor for fusicoccin H. Fusicoccadiene synthase is an allosteric enzyme for GGPP cyclization that generates 64% fusicoccadiene, 9% delta-araneosene, and one additional unidentified diterpene product, when incubated with GGPP. In the absence of isopentenyl diphosphate (IPP), PaFS can also solvolyze the shorter chain geranyl diphosphate (GPP) and farnesyl diphosphate (FPP) as alternative substrates to yield predominantly acyclic products. FPP is converted to farnesol (60.5%), nerolidol (14.0%), and farnesene (14.0%), while GPP is converted to a mixture of geraniol (59.5%) and linalool (35.0%). The second step is the oxidation at the C-8 position by the cytochrome P450 monooxygenase PaP450-2 to yield fusicocca-2,10(14)-diene-8-beta-ol. The cytochrome P450 monooxygenase PaP450-1 then catalyzes the hydroxylation at the C-16 position to produce fusicocca-2,10(14)-diene-8-beta,16-diol. The dioxygenase fc-dox then catalyzes the 16-oxydation of fusicocca-2,10(14)-diene-8-beta,16-diol to yield an aldehyde (8-beta-hydroxyfusicocca-1,10(14)-dien-16-al). The short-chain dehydrogenase/reductase fc-sdr catalyzes the reduction of the aldehyde to yield fusicocca-1,10(14)-diene-8-beta,16-diol. The next step is the hydroxylation at C-9 performed by the cytochrome P450 monooxygenase PaP450-3 that leads to fusicoccin H aglycon which is glycosylated to fusicoccin H by the O-glycosyltransferase PAGT. Hydroxylation at C-12 by the cytochrome P450 monooxygenase PaP450-4 leads then to the production of fusicoccin Q and is followed by methylation by the O-methyltransferase PAMT to yield fusicoccin P. Fusicoccin P is further converted to fusicoccin J via prenylation by the O-glucose prenyltransferase PaPT. Cytochrome P450 monooxygenase PaP450-5 then performs hydroxylation at C-19 to yield dideacetyl-fusicoccin A which is acetylated to 3'-O-deacetyl-fusicoccin A by the O-acetyltransferase PaAT-2. Finally, a another acetylation by the O-acetyltransferase PaAT-1 yields fusicoccin A. This Phomopsis amygdali (Fusicoccum amygdali) protein is Fusicoccadiene synthase.